A 372-amino-acid polypeptide reads, in one-letter code: Proline-rich P65 protein homolog (372 aa).

Over residues 1–37 (MEKNRSAFQQNQQASNQPFNQDQNQYYQDPNQQQFNQ) the composition is skewed to low complexity. The disordered stretch occupies residues 1 to 100 (MEKNRSAFQQ…GFDPNQQYYQ (100 aa)). 13 consecutive repeat copies span residues 29–40 (DPNQQQFNQSGF), 41–52 (DPNQQQFNQPGF), 53–60 (DPNQQYYQ), 61–72 (DPNQQQFNQAGF), 73–80 (DQNQQYYQ), 81–92 (DPNQQQFNQPGF), 93–100 (DPNQQYYQ), 101–112 (DPNQQQFNQAGF), 113–119 (DQNQYYQ), 120–131 (DPNQQQFNQSGF), 132–138 (DQNQYYQ), 139–150 (DPNQQQFNQPSF), and 151–162 (DLNNQQFNQPGF). Polar residues predominate over residues 38–49 (SGFDPNQQQFNQ). The span at 53-100 (DPNQQYYQDPNQQQFNQAGFDQNQQYYQDPNQQQFNQPGFDPNQQYYQ) shows a compositional bias: low complexity. Residues 122 to 150 (NQQQFNQSGFDQNQYYQDPNQQQFNQPSF) form a disordered region.

The chain is Proline-rich P65 protein homolog from Mycoplasma genitalium (strain ATCC 33530 / DSM 19775 / NCTC 10195 / G37) (Mycoplasmoides genitalium).